Consider the following 264-residue polypeptide: Pyridoxine 5'-phosphate synthase (264 aa).

A 3-amino-2-oxopropyl phosphate-binding site is contributed by asparagine 28. 30 to 31 (DH) serves as a coordination point for 1-deoxy-D-xylulose 5-phosphate. 3-amino-2-oxopropyl phosphate is bound at residue arginine 39. The active-site Proton acceptor is the histidine 64. Residues arginine 66 and histidine 71 each contribute to the 1-deoxy-D-xylulose 5-phosphate site. Glutamate 91 serves as the catalytic Proton acceptor. Threonine 121 is a binding site for 1-deoxy-D-xylulose 5-phosphate. The Proton donor role is filled by histidine 217. 3-amino-2-oxopropyl phosphate-binding positions include glycine 218 and 239–240 (GH).

It belongs to the PNP synthase family. In terms of assembly, homooctamer; tetramer of dimers.

Its subcellular location is the cytoplasm. The enzyme catalyses 3-amino-2-oxopropyl phosphate + 1-deoxy-D-xylulose 5-phosphate = pyridoxine 5'-phosphate + phosphate + 2 H2O + H(+). Its pathway is cofactor biosynthesis; pyridoxine 5'-phosphate biosynthesis; pyridoxine 5'-phosphate from D-erythrose 4-phosphate: step 5/5. Its function is as follows. Catalyzes the complicated ring closure reaction between the two acyclic compounds 1-deoxy-D-xylulose-5-phosphate (DXP) and 3-amino-2-oxopropyl phosphate (1-amino-acetone-3-phosphate or AAP) to form pyridoxine 5'-phosphate (PNP) and inorganic phosphate. This chain is Pyridoxine 5'-phosphate synthase, found in Psychrobacter arcticus (strain DSM 17307 / VKM B-2377 / 273-4).